Here is a 247-residue protein sequence, read N- to C-terminus: Protein NipSnap homolog 3A (247 aa).

Residues lysine 48 and lysine 166 each carry the N6-acetyllysine modification.

Belongs to the NipSnap family.

It is found in the cytoplasm. It localises to the cytosol. This is Protein NipSnap homolog 3A (NIPSNAP3A) from Pongo abelii (Sumatran orangutan).